Consider the following 460-residue polypeptide: tRNA modification GTPase MnmE (460 aa).

(6S)-5-formyl-5,6,7,8-tetrahydrofolate contacts are provided by R22, E83, and K122. In terms of domain architecture, TrmE-type G spans 219 to 381 (GIKTLIIGRP…LQQTILKKFQ (163 aa)). N229 is a binding site for K(+). Residues 229 to 234 (NVGKSS), 248 to 254 (SDISGTT), and 273 to 276 (DTAG) each bind GTP. S233 serves as a coordination point for Mg(2+). K(+) is bound by residues S248, I250, and T253. Position 254 (T254) interacts with Mg(2+). K460 serves as a coordination point for (6S)-5-formyl-5,6,7,8-tetrahydrofolate.

The protein belongs to the TRAFAC class TrmE-Era-EngA-EngB-Septin-like GTPase superfamily. TrmE GTPase family. In terms of assembly, homodimer. Heterotetramer of two MnmE and two MnmG subunits. Requires K(+) as cofactor.

The protein resides in the cytoplasm. In terms of biological role, exhibits a very high intrinsic GTPase hydrolysis rate. Involved in the addition of a carboxymethylaminomethyl (cmnm) group at the wobble position (U34) of certain tRNAs, forming tRNA-cmnm(5)s(2)U34. This chain is tRNA modification GTPase MnmE, found in Aster yellows witches'-broom phytoplasma (strain AYWB).